Here is a 426-residue protein sequence, read N- to C-terminus: Enolase (426 aa).

Glutamine 165 serves as a coordination point for (2R)-2-phosphoglycerate. Residue glutamate 209 is the Proton donor of the active site. Aspartate 244, glutamate 287, and aspartate 313 together coordinate Mg(2+). (2R)-2-phosphoglycerate is bound by residues lysine 338, arginine 367, serine 368, and lysine 389. The active-site Proton acceptor is lysine 338.

It belongs to the enolase family. Requires Mg(2+) as cofactor.

The protein resides in the cytoplasm. It is found in the secreted. The protein localises to the cell surface. The catalysed reaction is (2R)-2-phosphoglycerate = phosphoenolpyruvate + H2O. It participates in carbohydrate degradation; glycolysis; pyruvate from D-glyceraldehyde 3-phosphate: step 4/5. Functionally, catalyzes the reversible conversion of 2-phosphoglycerate (2-PG) into phosphoenolpyruvate (PEP). It is essential for the degradation of carbohydrates via glycolysis. The sequence is that of Enolase from Methanococcus vannielii (strain ATCC 35089 / DSM 1224 / JCM 13029 / OCM 148 / SB).